We begin with the raw amino-acid sequence, 37 residues long: Cytochrome b6-f complex subunit 5 (37 aa).

A helical transmembrane segment spans residues 5-25; sequence LLCGIVLGLVPVTIAGLFVTA.

The protein belongs to the PetG family. As to quaternary structure, the 4 large subunits of the cytochrome b6-f complex are cytochrome b6, subunit IV (17 kDa polypeptide, PetD), cytochrome f and the Rieske protein, while the 4 small subunits are PetG, PetL, PetM and PetN. The complex functions as a dimer.

The protein localises to the plastid. Its subcellular location is the chloroplast thylakoid membrane. Functionally, component of the cytochrome b6-f complex, which mediates electron transfer between photosystem II (PSII) and photosystem I (PSI), cyclic electron flow around PSI, and state transitions. PetG is required for either the stability or assembly of the cytochrome b6-f complex. The polypeptide is Cytochrome b6-f complex subunit 5 (Chlamydomonas reinhardtii (Chlamydomonas smithii)).